A 431-amino-acid chain; its full sequence is MTKKVCSCINELPDDLILKILSFVSTKHVVVTSLLSKKWKSLWTRVPILKYDVRDHTRFERFLDKSLFSHQSHVLESLHVELSVTLWNKDIGPWIRTALHHHHCHLRELEIDACIVHTVLPPELFTCKTLVVLKLKGIVIDVEAPLTTVSLPSLKTLHIDHSSLFDFGSLQMLLSNCNFITDLMVIRESRFFFAEYDVSWCKTLMALKLEGLKDVISISSSSAVCLPLLKTLHVARMEDFNNDSFCRLLSNCPVLSDLTLEEKTSDVLLNLDIDMPYLQRLSIITRVDADSKHIFSLMKNYTRKLAIIAPSFKYFSIQELAYASRYRYIVRVRLGVPSKLEDASTFSRIVHLELSICSERSVEMLVDLLLCFTKLVVLKLEHVYLLTPLGRWEPPSLVPECLLSSLEALEWKGYTGRYGDKDLRSNRLKRT.

The region spanning 6-62 is the F-box domain; sequence CSCINELPDDLILKILSFVSTKHVVVTSLLSKKWKSLWTRVPILKYDVRDHTRFERF. 8 LRR repeats span residues 56 to 82, 88 to 113, 135 to 161, 162 to 187, 209 to 236, 237 to 262, 264 to 285, and 357 to 382; these read HTRFERFLDKSLFSHQSHVLESLHVEL, NKDIGPWIRTALHHHHCHLRELEIDA, LKGIVIDVEAPLTTVSLPSLKTLHIDH, SSLFDFGSLQMLLSNCNFITDLMVIR, LEGLKDVISISSSSAVCLPLLKTLHVAR, MEDFNNDSFCRLLSNCPVLSDLTLEE, TSDVLLNLDIDMPYLQRLSIIT, and CSERSVEMLVDLLLCFTKLVVLKLEH. An FBD domain is found at 391 to 423; it reads RWEPPSLVPECLLSSLEALEWKGYTGRYGDKDL.

This chain is Putative F-box/FBD/LRR-repeat protein At3g56780, found in Arabidopsis thaliana (Mouse-ear cress).